Consider the following 221-residue polypeptide: D-glycero-alpha-D-manno-heptose 1-phosphate guanylyltransferase (221 aa).

It belongs to the D-alpha-D-heptose-1-P guanylyltransferase family.

It carries out the reaction D-glycero-alpha-D-manno-heptose 1-phosphate + GTP + H(+) = GDP-D-glycero-alpha-D-manno-heptose + diphosphate. It participates in nucleotide-sugar biosynthesis; GDP-D-glycero-alpha-D-manno-heptose biosynthesis; GDP-D-glycero-alpha-D-manno-heptose from D-glycero-alpha-D-manno-heptose 7-phosphate: step 3/3. It functions in the pathway capsule biogenesis; capsule polysaccharide biosynthesis. Catalyzes the GDP transfer from GTP to D-glycero-alpha-D-manno-heptose 1-phosphate, yielding GDP-D-alpha-D-heptose. Is able to use ATP, CTP or UTP as substrate in the presence of pyrophosphatase, but at a significantly slower rate. Can also form GDP-alpha-D-mannose from alpha-D-mannose 1-phosphate and GTP. This chain is D-glycero-alpha-D-manno-heptose 1-phosphate guanylyltransferase, found in Campylobacter jejuni subsp. jejuni serotype O:2 (strain ATCC 700819 / NCTC 11168).